Reading from the N-terminus, the 132-residue chain is Ribosome-binding factor A (132 aa).

The disordered stretch occupies residues 113 to 132 (EANSTRAKDDDEADAPAKDD).

Belongs to the RbfA family. As to quaternary structure, monomer. Binds 30S ribosomal subunits, but not 50S ribosomal subunits or 70S ribosomes.

The protein resides in the cytoplasm. In terms of biological role, one of several proteins that assist in the late maturation steps of the functional core of the 30S ribosomal subunit. Associates with free 30S ribosomal subunits (but not with 30S subunits that are part of 70S ribosomes or polysomes). Required for efficient processing of 16S rRNA. May interact with the 5'-terminal helix region of 16S rRNA. The chain is Ribosome-binding factor A from Burkholderia ambifaria (strain MC40-6).